Consider the following 415-residue polypeptide: uncharacterized protein (415 aa).

Residues cysteine 276 and cysteine 316 each coordinate [4Fe-4S] cluster.

Homodimer. It depends on [4Fe-4S] cluster as a cofactor.

This is an uncharacterized protein from Methanocaldococcus jannaschii (strain ATCC 43067 / DSM 2661 / JAL-1 / JCM 10045 / NBRC 100440) (Methanococcus jannaschii).